Here is a 529-residue protein sequence, read N- to C-terminus: Zinc metalloproteinase MspA (529 aa).

The N-terminal stretch at 1 to 24 is a signal peptide; that stretch reads MHHNYYLSPLAVALALGMVSPAKA. The propeptide occupies 25–204; the sequence is ADPILLQNAS…PFVQWNDIKT (180 aa). Residue H365 participates in Zn(2+) binding. E366 is a catalytic residue. Residues H369 and E389 each coordinate Zn(2+). H451 functions as the Proton donor in the catalytic mechanism.

It belongs to the peptidase M4 family. Zn(2+) is required as a cofactor.

The chain is Zinc metalloproteinase MspA (mspA) from Legionella longbeachae.